The following is a 185-amino-acid chain: HTH-type transcriptional regulator SAR2658 (185 aa).

Residues 6–66 (KENRQRIEEI…YVIQRDLDIF (61 aa)) enclose the HTH tetR-type domain. Positions 29 to 48 (SMNRIAKELGIGMGTLYRHF) form a DNA-binding region, H-T-H motif.

This Staphylococcus aureus (strain MRSA252) protein is HTH-type transcriptional regulator SAR2658.